We begin with the raw amino-acid sequence, 195 residues long: Recombination protein RecR (195 aa).

The C4-type zinc finger occupies 56 to 71 (CRQCHSFSDDDICPIC). In terms of domain architecture, Toprim spans 79–174 (SVLCVVETAA…KVTRIAQGIP (96 aa)).

It belongs to the RecR family.

In terms of biological role, may play a role in DNA repair. It seems to be involved in an RecBC-independent recombinational process of DNA repair. It may act with RecF and RecO. The polypeptide is Recombination protein RecR (Psychrobacter sp. (strain PRwf-1)).